Here is a 127-residue protein sequence, read N- to C-terminus: Glycine cleavage system H protein (127 aa).

In terms of domain architecture, Lipoyl-binding spans 24–105 (TALVGITDFA…YNEGWIVKMK (82 aa)). The residue at position 65 (Lys-65) is an N6-lipoyllysine.

This sequence belongs to the GcvH family. As to quaternary structure, the glycine cleavage system is composed of four proteins: P, T, L and H. The cofactor is (R)-lipoate.

In terms of biological role, the glycine cleavage system catalyzes the degradation of glycine. The H protein shuttles the methylamine group of glycine from the P protein to the T protein. The sequence is that of Glycine cleavage system H protein from Chlorobaculum tepidum (strain ATCC 49652 / DSM 12025 / NBRC 103806 / TLS) (Chlorobium tepidum).